The following is a 231-amino-acid chain: Endonuclease NucS (231 aa).

Belongs to the NucS endonuclease family.

It is found in the cytoplasm. In terms of biological role, cleaves both 3' and 5' ssDNA extremities of branched DNA structures. This chain is Endonuclease NucS, found in Pseudarthrobacter chlorophenolicus (strain ATCC 700700 / DSM 12829 / CIP 107037 / JCM 12360 / KCTC 9906 / NCIMB 13794 / A6) (Arthrobacter chlorophenolicus).